Consider the following 59-residue polypeptide: Protein translocase subunit SecE (59 aa).

The chain crosses the membrane as a helical span at residues valine 39–phenylalanine 59.

The protein belongs to the SecE/SEC61-gamma family. As to quaternary structure, component of the Sec protein translocase complex. Heterotrimer consisting of SecY, SecE and SecG subunits. The heterotrimers can form oligomers, although 1 heterotrimer is thought to be able to translocate proteins. Interacts with the ribosome. Interacts with SecDF, and other proteins may be involved. Interacts with SecA.

It is found in the cell inner membrane. Its function is as follows. Essential subunit of the Sec protein translocation channel SecYEG. Clamps together the 2 halves of SecY. May contact the channel plug during translocation. This chain is Protein translocase subunit SecE, found in Treponema pallidum (strain Nichols).